The chain runs to 106 residues: UPF0145 protein Fphi_1781 (106 aa).

The protein belongs to the UPF0145 family.

The chain is UPF0145 protein Fphi_1781 from Francisella philomiragia subsp. philomiragia (strain ATCC 25017 / CCUG 19701 / FSC 153 / O#319-036).